The chain runs to 326 residues: Vitamin B12 import system permease protein BtuC (326 aa).

9 consecutive transmembrane segments (helical) span residues 15–35 (WLLC…CAGE), 61–81 (LAVL…QALF), 88–108 (PGLL…VLLG), 112–132 (LPNW…TLIL), 146–166 (LLAG…AIYF), 184–204 (GGVD…LLWI), 240–260 (GWMV…GLVI), 274–294 (VLLP…DIVA), and 302–322 (ELPI…WLLL).

This sequence belongs to the binding-protein-dependent transport system permease family. FecCD subfamily. The complex is composed of two ATP-binding proteins (BtuD), two transmembrane proteins (BtuC) and a solute-binding protein (BtuF).

Its subcellular location is the cell inner membrane. Functionally, part of the ABC transporter complex BtuCDF involved in vitamin B12 import. Involved in the translocation of the substrate across the membrane. The sequence is that of Vitamin B12 import system permease protein BtuC from Shigella boydii serotype 18 (strain CDC 3083-94 / BS512).